A 119-amino-acid chain; its full sequence is Chorion class CA protein ERA.1 (119 aa).

An N-terminal signal peptide occupies residues 1–21 (MSTFAVLLLCVQACLIQNVYS). Positions 22 to 55 (QCLGRVGPGGPPLGPYGGPLGGPGYGPVGYGGCG) are left arm. A central domain region spans residues 56–103 (GYGGSGIGNVAVAGELPVAGSTGVMGQVPVIGAVEFAGPACAVGSVSI). The right arm stretch occupies residues 104–119 (SGACGPTCGCGGSPYY).

Belongs to the chorion protein family.

Its function is as follows. This protein is one of many from the eggshell of the silk moth. This chain is Chorion class CA protein ERA.1 (ERA.1), found in Bombyx mori (Silk moth).